The sequence spans 205 residues: Cell wall / vacuolar inhibitor of fructosidase 1 (205 aa).

The first 23 residues, methionine 1–glycine 23, serve as a signal peptide directing secretion. Cystine bridges form between cysteine 30/cysteine 39 and cysteine 93/cysteine 134. N-linked (GlcNAc...) asparagine glycosylation is found at asparagine 139 and asparagine 156.

Belongs to the PMEI family. Mostly expressed in roots, senescent leaves and flowers (in sepals), and, to a lower extent, in stems, specifically in the vascular tissues (e.g. in the phloem).

The protein localises to the vacuole. Inhibits fructosidases from vacuoles (vacuolar invertase VI). The sequence is that of Cell wall / vacuolar inhibitor of fructosidase 1 (C/VIF1) from Arabidopsis thaliana (Mouse-ear cress).